The chain runs to 138 residues: NADH dehydrogenase [ubiquinone] iron-sulfur protein 2, mitochondrial (138 aa).

Belongs to the complex I 49 kDa subunit family. In terms of assembly, core subunit of respiratory chain NADH dehydrogenase (Complex I) which is composed of 45 different subunits. Component of the iron-sulfur (IP) fragment of the enzyme. Interacts with NDUFAF3. Interacts with NDUFAF7. Interacts with CERS2. [4Fe-4S] cluster is required as a cofactor. Dimethylation at Arg-118 by NDUFAF7 takes place after NDUFS2 assembles into the complex I, leading to stabilize the early intermediate complex.

The protein resides in the mitochondrion inner membrane. It carries out the reaction a ubiquinone + NADH + 5 H(+)(in) = a ubiquinol + NAD(+) + 4 H(+)(out). Its function is as follows. Core subunit of the mitochondrial membrane respiratory chain NADH dehydrogenase (Complex I) which catalyzes electron transfer from NADH through the respiratory chain, using ubiquinone as an electron acceptor. Essential for the catalytic activity and assembly of complex I. Redox-sensitive, critical component of the oxygen-sensing pathway in the pulmonary vasculature which plays a key role in acute pulmonary oxygen-sensing and hypoxic pulmonary vasoconstriction. Plays an important role in carotid body sensing of hypoxia. Essential for glia-like neural stem and progenitor cell proliferation, differentiation and subsequent oligodendrocyte or neuronal maturation. The protein is NADH dehydrogenase [ubiquinone] iron-sulfur protein 2, mitochondrial of Mesocricetus auratus (Golden hamster).